A 102-amino-acid chain; its full sequence is Small ribosomal subunit protein uS10 (102 aa).

Belongs to the universal ribosomal protein uS10 family. As to quaternary structure, part of the 30S ribosomal subunit.

In terms of biological role, involved in the binding of tRNA to the ribosomes. In Parafrankia sp. (strain EAN1pec), this protein is Small ribosomal subunit protein uS10.